A 249-amino-acid polypeptide reads, in one-letter code: MDRRDYLAYAFAGLGAFLVAFIGLPLFMIFIKQAYDLEALQRTLVDPLVIESIRNSLFTATVSTLLGILFGVPLGYVLARKEFKGKNFVQALIDTPIVIPHSVVGIMLLVTFSDAILDNYKGIVAVMLFVSSPFIVNSARDGFLSVDEKLEYVARTLGASGLRTFFSVTLPNAIHSIASGAIMAWARAISEVGAILIVAYYPKTAQVLIMEYFNNYGLRASRPIAVILVTISLAVFIFLRWLVGRGRNA.

Topologically, residues 1–10 are cytoplasmic; it reads MDRRDYLAYA. A helical transmembrane segment spans residues 11–31; the sequence is FAGLGAFLVAFIGLPLFMIFI. Over 32–56 the chain is Extracellular; the sequence is KQAYDLEALQRTLVDPLVIESIRNS. One can recognise an ABC transmembrane type-1 domain in the interval 53 to 239; it reads IRNSLFTATV…TISLAVFIFL (187 aa). A helical transmembrane segment spans residues 57 to 77; sequence LFTATVSTLLGILFGVPLGYV. Topologically, residues 78 to 96 are cytoplasmic; it reads LARKEFKGKNFVQALIDTP. A helical membrane pass occupies residues 97 to 117; sequence IVIPHSVVGIMLLVTFSDAIL. Asp-118 is a topological domain (extracellular). A helical transmembrane segment spans residues 119-139; sequence NYKGIVAVMLFVSSPFIVNSA. Topologically, residues 140-179 are cytoplasmic; sequence RDGFLSVDEKLEYVARTLGASGLRTFFSVTLPNAIHSIAS. The helical transmembrane segment at 180 to 200 threads the bilayer; the sequence is GAIMAWARAISEVGAILIVAY. Over 201–223 the chain is Extracellular; sequence YPKTAQVLIMEYFNNYGLRASRP. Residues 224–244 traverse the membrane as a helical segment; the sequence is IAVILVTISLAVFIFLRWLVG. The Cytoplasmic portion of the chain corresponds to 245-249; that stretch reads RGRNA.

This sequence belongs to the binding-protein-dependent transport system permease family. In terms of assembly, the complex is composed of two ATP-binding proteins (WtpC), two transmembrane proteins (WtpB) and a solute-binding protein (WtpA).

It is found in the cell membrane. In terms of biological role, part of the ABC transporter complex WtpABC involved in molybdate/tungstate import. Probably responsible for the translocation of the substrate across the membrane. The sequence is that of Molybdate/tungstate transport system permease protein WtpB from Pyrococcus furiosus (strain ATCC 43587 / DSM 3638 / JCM 8422 / Vc1).